A 610-amino-acid polypeptide reads, in one-letter code: Cytosolic 5'-nucleotidase 1B (610 aa).

Disordered regions lie at residues 1–34 (MSQT…DKTG) and 101–277 (GSQE…DEDD). The span at 9–34 (KKNEPGMRSSKESLEAEKRKESDKTG) shows a compositional bias: basic and acidic residues. The segment covering 119 to 132 (SQWSRISRSPSTKA) has biased composition (polar residues). Over residues 148–166 (PSSSTSSRTPSTSPSLHDS) the composition is skewed to low complexity. Over residues 167-183 (SPPPLSGQPSLQPPASP) the composition is skewed to pro residues. Residues 236–265 (SRTSPTEWKSSSQRRGIYPASTQLDRNSLS) show a composition bias toward polar residues. D467 functions as the Nucleophile in the catalytic mechanism.

The protein belongs to the 5'-nucleotidase type 3 family. The cofactor is Mg(2+). As to expression, highly expressed in testis, placenta and pancreas. Detected at lower levels in heart, kidney, liver and lung.

It is found in the cytoplasm. The catalysed reaction is a ribonucleoside 5'-phosphate + H2O = a ribonucleoside + phosphate. It catalyses the reaction AMP + H2O = adenosine + phosphate. With respect to regulation, activated by ADP. Its function is as follows. Catalyzes the hydrolysis of nucleotide monophosphates, releasing inorganic phosphate and the corresponding nucleoside, AMP is the major substrate. The protein is Cytosolic 5'-nucleotidase 1B (NT5C1B) of Homo sapiens (Human).